Consider the following 158-residue polypeptide: 2-C-methyl-D-erythritol 2,4-cyclodiphosphate synthase (158 aa).

Residues D9 and H11 each coordinate a divalent metal cation. 4-CDP-2-C-methyl-D-erythritol 2-phosphate-binding positions include 9 to 11 and 35 to 36; these read DVH and HS. H43 is a binding site for a divalent metal cation. 4-CDP-2-C-methyl-D-erythritol 2-phosphate-binding positions include 57-59, 62-66, 101-107, 133-136, F140, and R143; these read DIG, FPDTD, AQKPKMA, and TTTE.

Belongs to the IspF family. As to quaternary structure, homotrimer. Requires a divalent metal cation as cofactor.

It catalyses the reaction 4-CDP-2-C-methyl-D-erythritol 2-phosphate = 2-C-methyl-D-erythritol 2,4-cyclic diphosphate + CMP. The protein operates within isoprenoid biosynthesis; isopentenyl diphosphate biosynthesis via DXP pathway; isopentenyl diphosphate from 1-deoxy-D-xylulose 5-phosphate: step 4/6. Its function is as follows. Involved in the biosynthesis of isopentenyl diphosphate (IPP) and dimethylallyl diphosphate (DMAPP), two major building blocks of isoprenoid compounds. Catalyzes the conversion of 4-diphosphocytidyl-2-C-methyl-D-erythritol 2-phosphate (CDP-ME2P) to 2-C-methyl-D-erythritol 2,4-cyclodiphosphate (ME-CPP) with a corresponding release of cytidine 5-monophosphate (CMP). The chain is 2-C-methyl-D-erythritol 2,4-cyclodiphosphate synthase from Geobacillus sp. (strain WCH70).